The following is a 416-amino-acid chain: Cotranscriptional regulator ARB2A (416 aa).

Positions 1–18 (MSISLSSLILLPIWINMA) are cleaved as a signal peptide. The segment at 208-247 (KPKIHVQSSSDSSDEPAEKRERKDKVSKETKKRRDFYEKY) is disordered. Basic and acidic residues predominate over residues 223–236 (PAEKRERKDKVSKE). The active-site Nucleophile is S293. The Prevents secretion from ER signature appears at 413–416 (HEEL).

It belongs to the ARB2A family. As to quaternary structure, interacts with AGO2. Found in a complex, composed of AGO2, CHD7 and ARB2A.

It is found in the nucleus. It localises to the cytoplasm. The protein resides in the endoplasmic reticulum. Functionally, plays a role in the regulation of alternative splicing, by interacting with AGO2 and CHD7. Seems to be required for stabilizing protein-protein interactions at the chromatin-spliceosome interface. May have hydrolase activity. This is Cotranscriptional regulator ARB2A from Homo sapiens (Human).